Here is a 368-residue protein sequence, read N- to C-terminus: Chaperone protein DnaJ (368 aa).

Positions 5–70 (DYYQVLGVPR…KKRKLYDTHG (66 aa)) constitute a J domain. The segment at 124-201 (GVERQIQIPT…CNGAGRVEDH (78 aa)) adopts a CR-type zinc-finger fold. Residues Cys137, Cys140, Cys153, Cys156, Cys175, Cys178, Cys189, and Cys192 each contribute to the Zn(2+) site. CXXCXGXG motif repeat units lie at residues 137–144 (CTHCHGSG), 153–160 (CGTCRGSG), 175–182 (CPHCGGRG), and 189–196 (CKVCNGAG).

It belongs to the DnaJ family. In terms of assembly, homodimer. Zn(2+) serves as cofactor.

The protein localises to the cytoplasm. Functionally, participates actively in the response to hyperosmotic and heat shock by preventing the aggregation of stress-denatured proteins and by disaggregating proteins, also in an autonomous, DnaK-independent fashion. Unfolded proteins bind initially to DnaJ; upon interaction with the DnaJ-bound protein, DnaK hydrolyzes its bound ATP, resulting in the formation of a stable complex. GrpE releases ADP from DnaK; ATP binding to DnaK triggers the release of the substrate protein, thus completing the reaction cycle. Several rounds of ATP-dependent interactions between DnaJ, DnaK and GrpE are required for fully efficient folding. Also involved, together with DnaK and GrpE, in the DNA replication of plasmids through activation of initiation proteins. This is Chaperone protein DnaJ from Xylella fastidiosa (strain 9a5c).